The chain runs to 242 residues: Pyridoxine 5'-phosphate synthase (242 aa).

Asn-7 lines the 3-amino-2-oxopropyl phosphate pocket. 9–10 contributes to the 1-deoxy-D-xylulose 5-phosphate binding site; sequence DH. Arg-18 is a 3-amino-2-oxopropyl phosphate binding site. The active-site Proton acceptor is His-44. 1-deoxy-D-xylulose 5-phosphate-binding residues include Arg-46 and His-51. Residue Glu-71 is the Proton acceptor of the active site. Thr-101 contributes to the 1-deoxy-D-xylulose 5-phosphate binding site. His-192 serves as the catalytic Proton donor. Residues Gly-193 and 214–215 each bind 3-amino-2-oxopropyl phosphate; that span reads GH.

This sequence belongs to the PNP synthase family. As to quaternary structure, homooctamer; tetramer of dimers.

The protein localises to the cytoplasm. It carries out the reaction 3-amino-2-oxopropyl phosphate + 1-deoxy-D-xylulose 5-phosphate = pyridoxine 5'-phosphate + phosphate + 2 H2O + H(+). It participates in cofactor biosynthesis; pyridoxine 5'-phosphate biosynthesis; pyridoxine 5'-phosphate from D-erythrose 4-phosphate: step 5/5. Its function is as follows. Catalyzes the complicated ring closure reaction between the two acyclic compounds 1-deoxy-D-xylulose-5-phosphate (DXP) and 3-amino-2-oxopropyl phosphate (1-amino-acetone-3-phosphate or AAP) to form pyridoxine 5'-phosphate (PNP) and inorganic phosphate. This Synechocystis sp. (strain ATCC 27184 / PCC 6803 / Kazusa) protein is Pyridoxine 5'-phosphate synthase.